The sequence spans 130 residues: Small ribosomal subunit protein uS8 (130 aa).

The protein belongs to the universal ribosomal protein uS8 family. In terms of assembly, part of the 30S ribosomal subunit. Contacts proteins S5 and S12.

Functionally, one of the primary rRNA binding proteins, it binds directly to 16S rRNA central domain where it helps coordinate assembly of the platform of the 30S subunit. This is Small ribosomal subunit protein uS8 from Photobacterium profundum (strain SS9).